Here is a 392-residue protein sequence, read N- to C-terminus: Cytochrome b (392 aa).

4 helical membrane passes run 38-58 (FGSL…FLAM), 82-104 (WLLR…LHIF), 119-139 (VRCL…TGYV), and 185-205 (FFSL…LHLA). 2 residues coordinate heme b: histidine 88 and histidine 102. Positions 189 and 203 each coordinate heme b. A ubiquinone is bound at residue histidine 208. Transmembrane regions (helical) follow at residues 231–251 (FYVK…IWIF), 295–315 (SGGV…PFFK), 327–347 (IHQG…WIGC), and 354–373 (FVTI…AITP).

Belongs to the cytochrome b family. As to quaternary structure, the main subunits of complex b-c1 are: cytochrome b, cytochrome c1 and the Rieske protein. Requires heme b as cofactor.

It is found in the mitochondrion inner membrane. Component of the ubiquinol-cytochrome c reductase complex (complex III or cytochrome b-c1 complex) that is part of the mitochondrial respiratory chain. The b-c1 complex mediates electron transfer from ubiquinol to cytochrome c. Contributes to the generation of a proton gradient across the mitochondrial membrane that is then used for ATP synthesis. The sequence is that of Cytochrome b (MT-CYB) from Vicia faba (Broad bean).